We begin with the raw amino-acid sequence, 85 residues long: Translation initiation factor IF-1 1 (85 aa).

An S1-like domain is found at 1 to 72; the sequence is MAKEELIEMS…SKGRITFRHL (72 aa).

The protein belongs to the IF-1 family. Component of the 30S ribosomal translation pre-initiation complex which assembles on the 30S ribosome in the order IF-2 and IF-3, IF-1 and N-formylmethionyl-tRNA(fMet); mRNA recruitment can occur at any time during PIC assembly.

It is found in the cytoplasm. Functionally, one of the essential components for the initiation of protein synthesis. Stabilizes the binding of IF-2 and IF-3 on the 30S subunit to which N-formylmethionyl-tRNA(fMet) subsequently binds. Helps modulate mRNA selection, yielding the 30S pre-initiation complex (PIC). Upon addition of the 50S ribosomal subunit IF-1, IF-2 and IF-3 are released leaving the mature 70S translation initiation complex. This chain is Translation initiation factor IF-1 1, found in Aromatoleum aromaticum (strain DSM 19018 / LMG 30748 / EbN1) (Azoarcus sp. (strain EbN1)).